The following is a 37-amino-acid chain: Large ribosomal subunit protein bL36 (37 aa).

This sequence belongs to the bacterial ribosomal protein bL36 family.

The protein is Large ribosomal subunit protein bL36 of Alkalilimnicola ehrlichii (strain ATCC BAA-1101 / DSM 17681 / MLHE-1).